A 101-amino-acid chain; its full sequence is Small ribosomal subunit protein uS14 (101 aa).

The protein belongs to the universal ribosomal protein uS14 family. Part of the 30S ribosomal subunit. Contacts proteins S3 and S10.

Its function is as follows. Binds 16S rRNA, required for the assembly of 30S particles and may also be responsible for determining the conformation of the 16S rRNA at the A site. This is Small ribosomal subunit protein uS14 from Arthrobacter sp. (strain FB24).